The sequence spans 667 residues: Gamma-tubulin complex component 4 (667 aa).

The disordered stretch occupies residues 425-445; it reads HKADATQAREGPSRETSPREA.

The protein belongs to the TUBGCP family. Component of the gamma-tubulin ring complex (gTuRC) consisting of TUBGCP2, TUBGCP3, TUBGCP4, TUBGCP5 and TUBGCP6 and gamma-tubulin TUBG1 or TUBG2. TUBGCP2, TUBGCP3, TUBGCP4, TUBGCP5 and TUBGCP6 assemble in a 5:5:2:1:1 stoichiometry; each is associated with a gamma-tubulin, thereby arranging 14 gamma-tubulins in a helical manner. Gamma-tubulin at the first position is blocked by TUBGCP3 at the last position, allowing 13 protafilaments to grow into a microtubule. The gTuRC (via TUBGCP3 and TUBGCP6) interacts with ACTB and MZT1; the interactions form a luminal bridge that stabilizes the initial structure during complex assembly. The gTuRC (via TUBGCP2) interacts with MZT2A/MZT2B and CDK5RAP2 (via CM1 motif); the interactions play a role in gTuRC activation. Interacts with NINL. Interacts with ATF5; the ATF5:PCNT:polyglutamylated tubulin (PGT) tripartite unites the mother centriole and the pericentriolar material (PCM) in the centrosome. Ubiquitously expressed.

The protein localises to the cytoplasm. Its subcellular location is the cytoskeleton. It localises to the microtubule organizing center. The protein resides in the centrosome. Functionally, component of the gamma-tubulin ring complex (gTuRC) which mediates microtubule nucleation. The gTuRC regulates the minus-end nucleation of alpha-beta tubulin heterodimers that grow into microtubule protafilaments, a critical step in centrosome duplication and spindle formation. The sequence is that of Gamma-tubulin complex component 4 (TUBGCP4) from Homo sapiens (Human).